A 102-amino-acid polypeptide reads, in one-letter code: Biotrophy-associated secreted protein 4 (102 aa).

The N-terminal stretch at 1–21 is a signal peptide; the sequence is MQLSFSAIAILLAFAVNHATA. N-linked (GlcNAc...) asparagine glycosylation is present at asparagine 36.

It localises to the secreted. Secreted effector involved in biotrophic colonization of plant cells. Participates in transition from the biotrophic to the necrotrophic phase of Magnaporthe oryzae. Elicits rice basic defense responses during the early stage of interaction and promotes cell death in the late stage of compatible interaction. This Pyricularia oryzae (strain 70-15 / ATCC MYA-4617 / FGSC 8958) (Rice blast fungus) protein is Biotrophy-associated secreted protein 4.